Reading from the N-terminus, the 334-residue chain is Methionine adenosyltransferase 2 subunit beta (334 aa).

NADP(+)-binding positions include 37–40 (TGLL), 60–62 (YSR), 71–72 (NL), Cys-93, Arg-97, and Tyr-159. Residues 319–334 (LWPFLVDKRWRQTVFH) form a required for interaction with MAT2A region.

Belongs to the dTDP-4-dehydrorhamnose reductase family. MAT2B subfamily. In terms of assembly, heterotrimer; composed of a catalytic mat2a homodimer that binds one regulatory mat2b chain. Heterohexamer; composed of a central, catalytic mat2a homotetramer flanked on either side by a regulatory mat2b chain. NADP binding increases the affinity for mat2a.

Its pathway is amino-acid biosynthesis; S-adenosyl-L-methionine biosynthesis; S-adenosyl-L-methionine from L-methionine: step 1/1. In terms of biological role, regulatory subunit of S-adenosylmethionine synthetase 2, an enzyme that catalyzes the formation of S-adenosylmethionine from methionine and ATP. Regulates MAT2A catalytic activity by changing its kinetic properties, increasing its affinity for L-methionine. Can bind NADP (in vitro). In Xenopus laevis (African clawed frog), this protein is Methionine adenosyltransferase 2 subunit beta (mat2b).